The sequence spans 147 residues: Nucleoside diphosphate kinase (147 aa).

6 residues coordinate ATP: Lys9, Phe57, Arg85, Thr91, Arg102, and Asn112. The active-site Pros-phosphohistidine intermediate is His115.

It belongs to the NDK family. Homotetramer. Requires Mg(2+) as cofactor.

The protein resides in the cytoplasm. It carries out the reaction a 2'-deoxyribonucleoside 5'-diphosphate + ATP = a 2'-deoxyribonucleoside 5'-triphosphate + ADP. The enzyme catalyses a ribonucleoside 5'-diphosphate + ATP = a ribonucleoside 5'-triphosphate + ADP. Functionally, major role in the synthesis of nucleoside triphosphates other than ATP. The ATP gamma phosphate is transferred to the NDP beta phosphate via a ping-pong mechanism, using a phosphorylated active-site intermediate. The protein is Nucleoside diphosphate kinase of Kosmotoga olearia (strain ATCC BAA-1733 / DSM 21960 / TBF 19.5.1).